Here is a 139-residue protein sequence, read N- to C-terminus: Nucleoside diphosphate kinase (139 aa).

ATP is bound by residues Lys-10, Phe-58, Arg-86, Thr-92, Arg-103, and Asn-113. The active-site Pros-phosphohistidine intermediate is the His-116.

The protein belongs to the NDK family. Homotetramer. Mg(2+) is required as a cofactor.

It localises to the cytoplasm. The enzyme catalyses a 2'-deoxyribonucleoside 5'-diphosphate + ATP = a 2'-deoxyribonucleoside 5'-triphosphate + ADP. It catalyses the reaction a ribonucleoside 5'-diphosphate + ATP = a ribonucleoside 5'-triphosphate + ADP. Its function is as follows. Major role in the synthesis of nucleoside triphosphates other than ATP. The ATP gamma phosphate is transferred to the NDP beta phosphate via a ping-pong mechanism, using a phosphorylated active-site intermediate. The protein is Nucleoside diphosphate kinase of Caulobacter sp. (strain K31).